A 219-amino-acid chain; its full sequence is Phosphate-specific transport system accessory protein PhoU homolog 1 (219 aa).

It belongs to the PhoU family. In terms of assembly, homodimer.

Its subcellular location is the cytoplasm. Plays a role in the regulation of phosphate uptake. This is Phosphate-specific transport system accessory protein PhoU homolog 1 from Methanothermobacter thermautotrophicus (strain ATCC 29096 / DSM 1053 / JCM 10044 / NBRC 100330 / Delta H) (Methanobacterium thermoautotrophicum).